We begin with the raw amino-acid sequence, 588 residues long: MNNSINHKFHHISRAEYQELLAVSRGDAVADYIIDNVSILDLINAGEISGPIVIKGRYIAGVGAEYADTPALQRIDARGATAVPGFIDAHLHIESSMMTPVTFETATLPRGLTTVICDPHEIVNVMGEAGFAWFARCAEQARQNQYLQVSSCVPALEGCDVNGASFTLEQMLAWRDHPQVTGLAEMMDYPGVINGQNALLDKLDAFRYLTLDGHCPGLGGKELNAYIAAGIENCHESYQLEEGRRKLQLGMSLMIREGSAASNLNALAPLINEFNSPQCMLCTDDRNPWEIAHEGHIDALIRRLIEQHNVPLHVAYRVASWSTARHFGLNHLGLLAPGKQADIVLLSDARKVTVQQVLVKGEPIDAQTLQAEESARLALSAPPYGNTIARQPVSASDFALQFTPGKRYRVIDVIHNELITHSRSSVYSENGFDRDDVCFIAVLERYRQRLAPACGLLGGFGLNEGALAATVSHDSHNIVVIGRSAEEMALAVNQVIQDGGGLCVVRNGQVQSHLPLPIAGLMSTDTAQSLAEQIDALKAAARECGPLPDEPFIQMAFLSLPVIPALKLTSQGLFDGEKFAFTTLEVTE.

Belongs to the metallo-dependent hydrolases superfamily. Adenine deaminase family. In terms of assembly, homodimer. Mn(2+) is required as a cofactor.

It catalyses the reaction adenine + H2O + H(+) = hypoxanthine + NH4(+). This Shigella flexneri serotype 5b (strain 8401) protein is Adenine deaminase.